A 191-amino-acid chain; its full sequence is Neuronal calcium sensor 1 (191 aa).

Residue Gly-2 is the site of N-myristoyl glycine attachment. EF-hand domains are found at residues 24–59, 60–95, 96–131, and 144–179; these read ESEI…FPFG, DPSK…TSRG, TVEE…IYRM, and TPEK…DPTI. Residues Asp-73, Asn-75, Asp-77, Glu-84, Asp-109, Asp-111, Asp-113, Tyr-115, Glu-120, Asp-157, Asn-159, Asp-161, Gln-163, and Glu-168 each contribute to the Ca(2+) site.

This sequence belongs to the recoverin family.

Its subcellular location is the perikaryon. It localises to the cell projection. The protein resides in the growth cone. Neuronal calcium sensor, regulator of G protein-coupled receptor phosphorylation in a calcium dependent manner. Regulates neurite extension and branching by activity-dependent Ca(2+) influx in growth cones. This Lymnaea stagnalis (Great pond snail) protein is Neuronal calcium sensor 1.